Here is a 270-residue protein sequence, read N- to C-terminus: NAD kinase (270 aa).

Asp-49 (proton acceptor) is an active-site residue. Residues 49–50 (DG), Arg-54, 126–127 (NE), Arg-152, Asp-154, 165–170 (TAYNKS), Ala-189, and Gln-227 contribute to the NAD(+) site.

Belongs to the NAD kinase family. It depends on a divalent metal cation as a cofactor.

It localises to the cytoplasm. It catalyses the reaction NAD(+) + ATP = ADP + NADP(+) + H(+). In terms of biological role, involved in the regulation of the intracellular balance of NAD and NADP, and is a key enzyme in the biosynthesis of NADP. Catalyzes specifically the phosphorylation on 2'-hydroxyl of the adenosine moiety of NAD to yield NADP. This Lactococcus lactis subsp. cremoris (strain MG1363) protein is NAD kinase.